We begin with the raw amino-acid sequence, 202 residues long: MKVLTARQQQVYDLIRDHIAQTGMPPTRAEIAQQLGFRSPNAAEEHLKALARKGVIEIVSGASRGIRLLMEEETGIPLVGRVAAGEPLLAQEHIECRYQVDPAMFKPSADFLLRVSGMSMKNIGIMDGDLLAVHKTEDVRNGQIVVARIDDEVTVKRLKKQGNTVHLLAENEEFAPIVVDLRQQSFSIEGLAVGVIRNSDWS.

The H-T-H motif DNA-binding region spans arginine 28–lysine 48. Catalysis depends on for autocatalytic cleavage activity residues serine 119 and lysine 156.

It belongs to the peptidase S24 family. Homodimer.

It carries out the reaction Hydrolysis of Ala-|-Gly bond in repressor LexA.. Represses a number of genes involved in the response to DNA damage (SOS response), including recA and lexA. Binds to the 16 bp palindromic sequence 5'-CTGTATATATATACAG-3'. In the presence of single-stranded DNA, RecA interacts with LexA causing an autocatalytic cleavage which disrupts the DNA-binding part of LexA, leading to derepression of the SOS regulon and eventually DNA repair. This chain is LexA repressor, found in Pectobacterium carotovorum subsp. carotovorum (Erwinia carotovora subsp. carotovora).